Consider the following 477-residue polypeptide: MTDTTASGTARVRTRFAPSPTGFIHLGNIRSALYPWAFARAMGGDFILRIEDTDQQRSSQAALDVILESMQWLGMEPDEGPFHQMQRMERYRAVLAQLQAAGHAYPCYMSVAELDALREKQLAAKEKPRYDGSWRPEPGKTLPPVPAGMSPVLRFRNPQGGVVAWDDKVKGRIEIRNDELDDLVLARPDGTPTYNFCVVVDDIDMAITHVIRGDDHVNNTPRQINIFHALGKEPPVYAHLPTVLNEQGEKLSKRHGAKPVTQYRDEGYLPDAMINYLARLGWSHGDDEIFSRAQFLQWFNLDHLGRSAAQFDEAKLRWINAQHLKAMADDALAALVAAQLQRRGVAQQELANGLANGRLARICALFKDRCDTTVALANWAQVFYADVTPAETERALHVTEAIAPALDALADALSGCEWNRPAIAAAFKQVLASQGLKMPQLAMPTRVLTVGTAHTPSVDALLELMGREKVLARLRNR.

Positions 18–28 match the 'HIGH' region motif; that stretch reads PSPTGFIHLGN. Positions 128-138 are enriched in basic and acidic residues; the sequence is PRYDGSWRPEP. A disordered region spans residues 128 to 151; it reads PRYDGSWRPEPGKTLPPVPAGMSP. Residues 250–254 carry the 'KMSKS' region motif; sequence KLSKR. Lys253 is a binding site for ATP.

Belongs to the class-I aminoacyl-tRNA synthetase family. Glutamate--tRNA ligase type 1 subfamily. In terms of assembly, monomer.

The protein resides in the cytoplasm. It carries out the reaction tRNA(Glu) + L-glutamate + ATP = L-glutamyl-tRNA(Glu) + AMP + diphosphate. Catalyzes the attachment of glutamate to tRNA(Glu) in a two-step reaction: glutamate is first activated by ATP to form Glu-AMP and then transferred to the acceptor end of tRNA(Glu). In Verminephrobacter eiseniae (strain EF01-2), this protein is Glutamate--tRNA ligase.